The primary structure comprises 662 residues: Protein translocase subunit SecA 2 (662 aa).

ATP is bound by residues Gln-110, 128–132, and Asp-538; that span reads GEGKT.

The protein belongs to the SecA family. As to quaternary structure, monomer and homodimer. Part of the essential Sec protein translocation apparatus which comprises SecA, SecYEG and auxiliary proteins SecDF. Other proteins may also be involved.

It localises to the cell inner membrane. The protein localises to the cytoplasm. It catalyses the reaction ATP + H2O + cellular proteinSide 1 = ADP + phosphate + cellular proteinSide 2.. Functionally, part of the Sec protein translocase complex. Interacts with the SecYEG preprotein conducting channel. Has a central role in coupling the hydrolysis of ATP to the transfer of proteins into and across the cell membrane, serving as an ATP-driven molecular motor driving the stepwise translocation of polypeptide chains across the membrane. The polypeptide is Protein translocase subunit SecA 2 (Chlorobium chlorochromatii (strain CaD3)).